The following is a 391-amino-acid chain: Alpha-2B adrenergic receptor (391 aa).

The helical transmembrane segment at 1-25 threads the bilayer; the sequence is AIAAVITFLILFTIFGNALVILAVL. Over 26–36 the chain is Cytoplasmic; that stretch reads TSRSLRAPQNL. A helical transmembrane segment spans residues 37–62; sequence FLVSLAAADILVATLIIPFSLANELL. Topologically, residues 63–72 are extracellular; it reads GYWYFRRTWC. The cysteines at positions 72 and 151 are disulfide-linked. A helical transmembrane segment spans residues 73-95; it reads EVYLALDVLFCTSSIVHLCAISL. The Cytoplasmic segment spans residues 96–117; it reads DRYWAVSRALEYNSKRTPRRIK. A helical membrane pass occupies residues 118–140; it reads CIILTVWLIAAVISLPPLIYKGD. The Extracellular segment spans residues 141 to 156; the sequence is QGPQPRGRPQCKLNQE. A helical membrane pass occupies residues 157–180; the sequence is AWYILASSIGSFFAPCLIMILVYL. Residues 181–355 lie on the Cytoplasmic side of the membrane; the sequence is RIYLIAKRSH…LTREKRFTFV (175 aa). Disordered regions lie at residues 194–218 and 233–312; these read PRAK…APSS and EANR…PLQQ. Basic and acidic residues predominate over residues 233 to 247; that stretch reads EANRHSKSTGEKVEG. Positions 256–266 are enriched in pro residues; that stretch reads PGVPPSWPPLP. Residues 271 to 281 are compositionally biased toward basic and acidic residues; it reads GQEEDIYRASP. The span at 282–294 shows a compositional bias: acidic residues; the sequence is EEEAGDDEEEECE. The segment covering 295-309 has biased composition (low complexity); it reads PQAVPVSPASACSPP. Residues 356 to 379 traverse the membrane as a helical segment; it reads LAVVIGVFVLCWFPFFFSYSLGAI. At 380–388 the chain is on the extracellular side; it reads CPQHCKVPH. The chain crosses the membrane as a helical span at residues 389–391; that stretch reads GLF.

It belongs to the G-protein coupled receptor 1 family. Adrenergic receptor subfamily. ADRA2B sub-subfamily. As to quaternary structure, interacts with RAB26. Interacts with PPP1R9B. Interacts with GGA1, GGA2 and GGA3.

It localises to the cell membrane. Alpha-2 adrenergic receptors mediate the catecholamine-induced inhibition of adenylate cyclase through the action of G proteins. The protein is Alpha-2B adrenergic receptor (ADRA2B) of Erinaceus europaeus (Western European hedgehog).